The following is a 627-amino-acid chain: MASVAGDSAMEVVPALAEEAAAEATGPSCLVQLPGEVLEYILCSGSLTALDIGRVSSTCRRLREVCQSSGQVWKEQFRVRWPSLMKHYSPTDYVNWLEEYKVRQKAGLEARKIVASFSKRFFSEHVPCNGFSDIENLEGPEIFFEDELVCILNMEGRKALTWKYYAKKILYYLRQQKILNNLKAFLQQPDDYESYLEGAVYIDQYCNPLSDISFRDIQAQIHSIVELVCKTLRGINSRHPSLTFRAGESSMIMEIELQSQVLDAINYVLYDQLKFKGNRMDYYNALNLYMHQVLTRRTGIPISMSLLYLTVARQLGVPLEPVNFPSHFLLRWCQGAEGATLDIFDYIYIDAFGKGKQLTVKECEYLIGQHVTAALYGVVNVKKVLQRMVGNLLSLGKREGIDQSYQLLRDSLDLYLAMYPDQVQLLLLQARLYFHLGIWPEKSFCLVLKVLDILQHIQTLDPGQHGAVGYLVQHTLEHIERKKEEVGVEVKLRSEEKHRDVCYSIGLVMKHKRYGYNCVIYGWDPTCMMGHEWIRNMNVHSLPHGHHQPFYNVLVEDGSCRYAAQENLEYNVEPQEISHPDVGRYFSEFTGTHYIPNAELEIRYPEDLEFVYETVQNIYSAKEDTAE.

The F-box domain maps to 27–76 (PSCLVQLPGEVLEYILCSGSLTALDIGRVSSTCRRLREVCQSSGQVWKEQ).

In terms of assembly, directly interacts with SKP1 and CUL1.

Substrate-recognition component of the SCF (SKP1-CUL1-F-box protein)-type E3 ubiquitin ligase complex. This is F-box only protein 21 (Fbxo21) from Mus musculus (Mouse).